Reading from the N-terminus, the 579-residue chain is Proline--tRNA ligase (579 aa).

The protein belongs to the class-II aminoacyl-tRNA synthetase family. ProS type 1 subfamily. Homodimer.

It is found in the cytoplasm. The enzyme catalyses tRNA(Pro) + L-proline + ATP = L-prolyl-tRNA(Pro) + AMP + diphosphate. Its function is as follows. Catalyzes the attachment of proline to tRNA(Pro) in a two-step reaction: proline is first activated by ATP to form Pro-AMP and then transferred to the acceptor end of tRNA(Pro). As ProRS can inadvertently accommodate and process non-cognate amino acids such as alanine and cysteine, to avoid such errors it has two additional distinct editing activities against alanine. One activity is designated as 'pretransfer' editing and involves the tRNA(Pro)-independent hydrolysis of activated Ala-AMP. The other activity is designated 'posttransfer' editing and involves deacylation of mischarged Ala-tRNA(Pro). The misacylated Cys-tRNA(Pro) is not edited by ProRS. The protein is Proline--tRNA ligase of Chlamydia muridarum (strain MoPn / Nigg).